The chain runs to 202 residues: Holliday junction branch migration complex subunit RuvA (202 aa).

A domain I region spans residues 1–64 (MIGRLRGTLA…EDAQLLYGFA (64 aa)). Positions 65–143 (SKRERDFFRE…AWEAVPSMFA (79 aa)) are domain II. Residues 144–154 (LVPNQPDAPAP) are flexible linker. Residues 154–202 (PVASAESDAVSALISLGYKPQEASKAVSAIKDKGLSSEDMIRRALKGMI) are domain III.

Belongs to the RuvA family. As to quaternary structure, homotetramer. Forms an RuvA(8)-RuvB(12)-Holliday junction (HJ) complex. HJ DNA is sandwiched between 2 RuvA tetramers; dsDNA enters through RuvA and exits via RuvB. An RuvB hexamer assembles on each DNA strand where it exits the tetramer. Each RuvB hexamer is contacted by two RuvA subunits (via domain III) on 2 adjacent RuvB subunits; this complex drives branch migration. In the full resolvosome a probable DNA-RuvA(4)-RuvB(12)-RuvC(2) complex forms which resolves the HJ.

Its subcellular location is the cytoplasm. Functionally, the RuvA-RuvB-RuvC complex processes Holliday junction (HJ) DNA during genetic recombination and DNA repair, while the RuvA-RuvB complex plays an important role in the rescue of blocked DNA replication forks via replication fork reversal (RFR). RuvA specifically binds to HJ cruciform DNA, conferring on it an open structure. The RuvB hexamer acts as an ATP-dependent pump, pulling dsDNA into and through the RuvAB complex. HJ branch migration allows RuvC to scan DNA until it finds its consensus sequence, where it cleaves and resolves the cruciform DNA. This Pseudomonas fluorescens (strain ATCC BAA-477 / NRRL B-23932 / Pf-5) protein is Holliday junction branch migration complex subunit RuvA.